The primary structure comprises 109 residues: Fluoride-specific ion channel FluC 1 (109 aa).

The next 3 membrane-spanning stretches (helical) occupy residues 21 to 41 (LFIN…GFFI), 52 to 72 (IILS…YFLY), and 84 to 104 (IIFC…GFWI).

Belongs to the fluoride channel Fluc/FEX (TC 1.A.43) family.

Its subcellular location is the cell inner membrane. It carries out the reaction fluoride(in) = fluoride(out). Fluoride-specific ion channel. Important for reducing fluoride concentration in the cell, thus reducing its toxicity. In Prochlorococcus marinus (strain MIT 9312), this protein is Fluoride-specific ion channel FluC 1.